A 155-amino-acid polypeptide reads, in one-letter code: UPF0178 protein RPC_3085 (155 aa).

Belongs to the UPF0178 family.

The protein is UPF0178 protein RPC_3085 of Rhodopseudomonas palustris (strain BisB18).